The primary structure comprises 120 residues: Ragulator complex protein LAMTOR4 homolog (120 aa).

Residues 93-120 form a disordered region; sequence QNGVTTTTSSSSSNSVYNDASDSGAVLA. Low complexity predominate over residues 97–107; sequence TTTTSSSSSNS.

It belongs to the LAMTOR4 family. As to quaternary structure, part of the Ragulator complex composed of Lamtor3, Lamtor2, CG14184, CG14812, and Lamtor4.

It localises to the lysosome. Functionally, regulator of the TOR pathway, a signaling cascade that promotes cell growth in response to growth factors, energy levels, and amino acids. As part of the Ragulator complex, may activate the TOR signaling cascade in response to amino acids. In Drosophila melanogaster (Fruit fly), this protein is Ragulator complex protein LAMTOR4 homolog.